A 443-amino-acid chain; its full sequence is C4-dicarboxylate transport protein (443 aa).

9 helical membrane-spanning segments follow: residues 17–37 (PFYS…ILLG), 57–77 (LVKM…IAGM), 92–112 (LYFL…ANVV), 139–159 (EQSI…GAFA), 161–181 (GDIL…AMVG), 201–221 (LVAI…AFTI), 234–254 (MLIG…LGAV), 320–340 (IYMT…LSWG), and 368–388 (AATL…ILGI).

It belongs to the dicarboxylate/amino acid:cation symporter (DAACS) (TC 2.A.23) family.

The protein resides in the cell inner membrane. Functionally, responsible for the transport of dicarboxylates such as succinate, fumarate, and malate from the periplasm across the membrane. The polypeptide is C4-dicarboxylate transport protein (Rhizobium leguminosarum bv. trifolii (strain WSM2304)).